The chain runs to 151 residues: Sec-independent protein translocase protein TatB (151 aa).

Residues 1-21 (MFGMSLPEIIIIAVIAVIFLG) traverse the membrane as a helical segment. Over residues 120–131 (NNDPLNNETLNE) the composition is skewed to low complexity. The tract at residues 120-151 (NNDPLNNETLNEQPSKPSPNLNLENKEIKKEA) is disordered. Residues 132–142 (QPSKPSPNLNL) show a composition bias toward polar residues.

It belongs to the TatB family. In terms of assembly, the Tat system comprises two distinct complexes: a TatABC complex, containing multiple copies of TatA, TatB and TatC subunits, and a separate TatA complex, containing only TatA subunits. Substrates initially bind to the TatABC complex, which probably triggers association of the separate TatA complex to form the active translocon.

It is found in the cell inner membrane. In terms of biological role, part of the twin-arginine translocation (Tat) system that transports large folded proteins containing a characteristic twin-arginine motif in their signal peptide across membranes. Together with TatC, TatB is part of a receptor directly interacting with Tat signal peptides. TatB may form an oligomeric binding site that transiently accommodates folded Tat precursor proteins before their translocation. The sequence is that of Sec-independent protein translocase protein TatB from Campylobacter fetus subsp. fetus (strain 82-40).